The following is a 138-amino-acid chain: ATP synthase epsilon chain (138 aa).

It belongs to the ATPase epsilon chain family. F-type ATPases have 2 components, CF(1) - the catalytic core - and CF(0) - the membrane proton channel. CF(1) has five subunits: alpha(3), beta(3), gamma(1), delta(1), epsilon(1). CF(0) has three main subunits: a, b and c.

It localises to the cell inner membrane. Produces ATP from ADP in the presence of a proton gradient across the membrane. The protein is ATP synthase epsilon chain of Wigglesworthia glossinidia brevipalpis.